Reading from the N-terminus, the 330-residue chain is Lipoyl synthase (330 aa).

Residues Cys-77, Cys-82, Cys-88, Cys-103, Cys-107, Cys-110, and Ser-317 each contribute to the [4Fe-4S] cluster site. The Radical SAM core domain occupies 89 to 306 (FNHGTATFMI…RSEAEKMGFE (218 aa)).

Belongs to the radical SAM superfamily. Lipoyl synthase family. Requires [4Fe-4S] cluster as cofactor.

It localises to the cytoplasm. The catalysed reaction is [[Fe-S] cluster scaffold protein carrying a second [4Fe-4S](2+) cluster] + N(6)-octanoyl-L-lysyl-[protein] + 2 oxidized [2Fe-2S]-[ferredoxin] + 2 S-adenosyl-L-methionine + 4 H(+) = [[Fe-S] cluster scaffold protein] + N(6)-[(R)-dihydrolipoyl]-L-lysyl-[protein] + 4 Fe(3+) + 2 hydrogen sulfide + 2 5'-deoxyadenosine + 2 L-methionine + 2 reduced [2Fe-2S]-[ferredoxin]. It functions in the pathway protein modification; protein lipoylation via endogenous pathway; protein N(6)-(lipoyl)lysine from octanoyl-[acyl-carrier-protein]: step 2/2. Its function is as follows. Catalyzes the radical-mediated insertion of two sulfur atoms into the C-6 and C-8 positions of the octanoyl moiety bound to the lipoyl domains of lipoate-dependent enzymes, thereby converting the octanoylated domains into lipoylated derivatives. In Haemophilus ducreyi (strain 35000HP / ATCC 700724), this protein is Lipoyl synthase.